A 510-amino-acid polypeptide reads, in one-letter code: GMP synthase [glutamine-hydrolyzing] (510 aa).

Positions 5–195 constitute a Glutamine amidotransferase type-1 domain; sequence LVIVVDFGGQ…LYEICKADGD (191 aa). The active-site Nucleophile is Cys82. Catalysis depends on residues His169 and Glu171. Residues 196–385 enclose the GMPS ATP-PPase domain; sequence WTMENFLEEQ…LEMPEYLVYR (190 aa). 223-229 is a binding site for ATP; the sequence is SGGVDSS.

As to quaternary structure, homodimer.

It catalyses the reaction XMP + L-glutamine + ATP + H2O = GMP + L-glutamate + AMP + diphosphate + 2 H(+). The protein operates within purine metabolism; GMP biosynthesis; GMP from XMP (L-Gln route): step 1/1. Catalyzes the synthesis of GMP from XMP. This chain is GMP synthase [glutamine-hydrolyzing], found in Finegoldia magna (strain ATCC 29328 / DSM 20472 / WAL 2508) (Peptostreptococcus magnus).